Here is a 328-residue protein sequence, read N- to C-terminus: Leucine carboxyl methyltransferase 1 (328 aa).

Residues Arg81, Gly105, Asp128, 175–177 (DLN), and Glu201 each bind S-adenosyl-L-methionine.

This sequence belongs to the methyltransferase superfamily. LCMT family.

It carries out the reaction [phosphatase 2A protein]-C-terminal L-leucine + S-adenosyl-L-methionine = [phosphatase 2A protein]-C-terminal L-leucine methyl ester + S-adenosyl-L-homocysteine. Inhibited by S-adenosyl-L-homocysteine. Functionally, methylates the carboxyl group of the C-terminal leucine residue of protein phosphatase 2A catalytic subunits to form alpha-leucine ester residues. Acts on the two major protein phosphatase 2A catalytic subunits, PPH21 and PPH22. This is Leucine carboxyl methyltransferase 1 (PPM1) from Saccharomyces cerevisiae (strain ATCC 204508 / S288c) (Baker's yeast).